The chain runs to 432 residues: Killer cell immunoglobulin-like receptor 3DL1 (432 aa).

An N-terminal signal peptide occupies residues 1–21 (MLLWFLSLVCSGFFLVQRMSA). Residues 22–335 (HVGSHDKPFL…ADTKTNNYKN (314 aa)) are Extracellular-facing. Ig-like C2-type domains lie at 42–100 (GQNV…HPQY), 135–202 (GGNV…NSYY), and 238–301 (GETM…FRNA). Asn44 is a glycosylation site (N-linked (GlcNAc...) asparagine). The cysteines at positions 49 and 95 are disulfide-linked. Asn137 carries an N-linked (GlcNAc...) asparagine glycan. Intrachain disulfides connect Cys142/Cys195 and Cys245/Cys294. An N-linked (GlcNAc...) asparagine glycan is attached at Asn300. The helical transmembrane segment at 336–356 (LHILTGLLVTMVLVVIIIFYS) threads the bilayer. Over 357 to 432 (CYFSKQNKSQ…DTIVYMEIMK (76 aa)) the chain is Cytoplasmic.

Belongs to the immunoglobulin superfamily.

It is found in the cell membrane. Receptor on natural killer (NK) cells. Inhibits the activity of NK cells thus preventing cell lysis. In Mus musculus (Mouse), this protein is Killer cell immunoglobulin-like receptor 3DL1 (Kir3dl1).